A 475-amino-acid chain; its full sequence is MNLETIIGLEVHVELKTNSKIFSASPTEFGAEPNTQTSVIDLGYPGVLPTLNKEAVNFAMKAAMALNCDIATETKFDRKNYFYPDNPKAYQISQFDKPIGENGWIEIEVDGKKKRIGITRLHLEEDAGKSTHTADGSLVDYNRQGMPLIEIVSEPDMRTPEEAYAYLEKLKSIIQYTGVSDCKMEEGSLRCDANISLRPVGQEKFGTKAELKNLNSFTYVQKGLEHEQVRQEKELLSGGIIQQETRRYDEATKKTILMRVKEGSDDYRYFPEPDLVELYIDDEWKEAVRASIPELPDARKARYVAELGLPAYDAHVLTLTKEMSDFFEATVADGADAKLTSNWLMGEVLAYLNKQQKELKDVALTPAGLSKMVQLIEKGTISSKIAKKVFNELIEKGGDPEEIVKAKGLVQISDEGTLRKVVTEILDNNEQSIEDFKNGKDRAIGFLVGQIMKATKGQANPPLVNKILLEEINKR.

Belongs to the GatB/GatE family. GatB subfamily. In terms of assembly, heterotrimer of A, B and C subunits.

It catalyses the reaction L-glutamyl-tRNA(Gln) + L-glutamine + ATP + H2O = L-glutaminyl-tRNA(Gln) + L-glutamate + ADP + phosphate + H(+). The enzyme catalyses L-aspartyl-tRNA(Asn) + L-glutamine + ATP + H2O = L-asparaginyl-tRNA(Asn) + L-glutamate + ADP + phosphate + 2 H(+). Allows the formation of correctly charged Asn-tRNA(Asn) or Gln-tRNA(Gln) through the transamidation of misacylated Asp-tRNA(Asn) or Glu-tRNA(Gln) in organisms which lack either or both of asparaginyl-tRNA or glutaminyl-tRNA synthetases. The reaction takes place in the presence of glutamine and ATP through an activated phospho-Asp-tRNA(Asn) or phospho-Glu-tRNA(Gln). The sequence is that of Aspartyl/glutamyl-tRNA(Asn/Gln) amidotransferase subunit B from Bacillus cereus (strain B4264).